Consider the following 303-residue polypeptide: 1D-myo-inositol 2-acetamido-2-deoxy-alpha-D-glucopyranoside deacetylase (303 aa).

Zn(2+) is bound by residues His15, Asp18, and His157.

The protein belongs to the MshB deacetylase family. The cofactor is Zn(2+).

The catalysed reaction is 1D-myo-inositol 2-acetamido-2-deoxy-alpha-D-glucopyranoside + H2O = 1D-myo-inositol 2-amino-2-deoxy-alpha-D-glucopyranoside + acetate. Functionally, catalyzes the deacetylation of 1D-myo-inositol 2-acetamido-2-deoxy-alpha-D-glucopyranoside (GlcNAc-Ins) in the mycothiol biosynthesis pathway. The polypeptide is 1D-myo-inositol 2-acetamido-2-deoxy-alpha-D-glucopyranoside deacetylase (Kribbella flavida (strain DSM 17836 / JCM 10339 / NBRC 14399)).